The primary structure comprises 567 residues: TGF-beta receptor type-2 (567 aa).

A signal peptide spans 1 to 22; it reads MGRGLLRGLWPLHIVLWTRIAS. Over 23 to 166 the chain is Extracellular; that stretch reads TIPPHVQKSV…NPDLLLVIFQ (144 aa). Intrachain disulfides connect Cys51–Cys84, Cys54–Cys71, Cys61–Cys67, Cys77–Cys101, Cys121–Cys136, and Cys138–Cys143. 2 N-linked (GlcNAc...) asparagine glycosylation sites follow: Asn70 and Asn94. N-linked (GlcNAc...) asparagine glycosylation occurs at Asn154. The helical transmembrane segment at 167 to 187 threads the bilayer; sequence VTGISLLPPLGVAISVIIIFY. At 188–567 the chain is on the cytoplasmic side; the sequence is CYRVNRQQKL…PEDGSLNTTK (380 aa). The Protein kinase domain occupies 244 to 544; it reads IELDTLVGKG…AERFSELEHL (301 aa). Residues 250–258 and Lys277 contribute to the ATP site; that span reads VGKGRFAEV. Catalysis depends on Asp379, which acts as the Proton acceptor. Phosphoserine occurs at positions 409, 548, and 553. The interval 439–567 is sufficient for interaction with CLU; that stretch reads VESFKQTDVY…PEDGSLNTTK (129 aa).

It belongs to the protein kinase superfamily. TKL Ser/Thr protein kinase family. TGFB receptor subfamily. Homodimer. Heterohexamer; TGFB1, TGFB2 and TGFB3 homodimeric ligands assemble a functional receptor composed of two TGFBR1 and TGFBR2 heterodimers to form a ligand-receptor heterohexamer. The respective affinity of TGFRB1 and TGFRB2 for the ligands may modulate the kinetics of assembly of the receptor and may explain the different biological activities of TGFB1, TGFB2 and TGFB3. Component of a complex composed of TSC22D1 (via N-terminus), TGFBR1 and TGFBR2; the interaction between TSC22D1 and TGFBR1 is inhibited by SMAD7 and promoted by TGFB1. Interacts with DAXX. Interacts with DYNLT4. Interacts with ZFYVE9; ZFYVE9 recruits SMAD2 and SMAD3 to the TGF-beta receptor. Interacts with and is activated by SCUBE3; this interaction does not affect TGFB1-binding to TGFBR2. Interacts with VPS39; this interaction is independent of the receptor kinase activity and of the presence of TGF-beta. Interacts with CLU. In terms of assembly, homodimer; disulfide-linked. Mg(2+) serves as cofactor. Mn(2+) is required as a cofactor. Post-translationally, phosphorylated on a Ser/Thr residue in the cytoplasmic domain.

Its subcellular location is the cell membrane. The protein resides in the membrane raft. The protein localises to the secreted. It catalyses the reaction L-threonyl-[receptor-protein] + ATP = O-phospho-L-threonyl-[receptor-protein] + ADP + H(+). It carries out the reaction L-seryl-[receptor-protein] + ATP = O-phospho-L-seryl-[receptor-protein] + ADP + H(+). Functionally, transmembrane serine/threonine kinase forming with the TGF-beta type I serine/threonine kinase receptor, TGFBR1, the non-promiscuous receptor for the TGF-beta cytokines TGFB1, TGFB2 and TGFB3. Transduces the TGFB1, TGFB2 and TGFB3 signal from the cell surface to the cytoplasm and thus regulates a plethora of physiological and pathological processes including cell cycle arrest in epithelial and hematopoietic cells, control of mesenchymal cell proliferation and differentiation, wound healing, extracellular matrix production, immunosuppression and carcinogenesis. The formation of the receptor complex composed of 2 TGFBR1 and 2 TGFBR2 molecules symmetrically bound to the cytokine dimer results in the phosphorylation and activation of TGFBR1 by the constitutively active TGFBR2. Activated TGFBR1 phosphorylates SMAD2 which dissociates from the receptor and interacts with SMAD4. The SMAD2-SMAD4 complex is subsequently translocated to the nucleus where it modulates the transcription of the TGF-beta-regulated genes. This constitutes the canonical SMAD-dependent TGF-beta signaling cascade. Also involved in non-canonical, SMAD-independent TGF-beta signaling pathways. In terms of biological role, has transforming growth factor beta-activated receptor activity. Binds TGFB1, TGFB2 and TGFB3 in the picomolar affinity range without the participation of additional receptors. Blocks activation of SMAD2 and SMAD3 by TGFB1. In Homo sapiens (Human), this protein is TGF-beta receptor type-2 (TGFBR2).